A 429-amino-acid polypeptide reads, in one-letter code: Enolase (429 aa).

Glutamine 164 lines the (2R)-2-phosphoglycerate pocket. Catalysis depends on glutamate 206, which acts as the Proton donor. 3 residues coordinate Mg(2+): aspartate 243, glutamate 286, and aspartate 313. Residues lysine 338, arginine 367, serine 368, and lysine 389 each coordinate (2R)-2-phosphoglycerate. The active-site Proton acceptor is lysine 338.

Belongs to the enolase family. Mg(2+) serves as cofactor.

Its subcellular location is the cytoplasm. It localises to the secreted. The protein resides in the cell surface. The enzyme catalyses (2R)-2-phosphoglycerate = phosphoenolpyruvate + H2O. Its pathway is carbohydrate degradation; glycolysis; pyruvate from D-glyceraldehyde 3-phosphate: step 4/5. In terms of biological role, catalyzes the reversible conversion of 2-phosphoglycerate (2-PG) into phosphoenolpyruvate (PEP). It is essential for the degradation of carbohydrates via glycolysis. The chain is Enolase from Thermosipho melanesiensis (strain DSM 12029 / CIP 104789 / BI429).